The sequence spans 755 residues: Protein phosphatase 1E (755 aa).

The segment at E21–L131 is disordered. Repeat copies occupy residues P31–E32, P33–E34, P35–E36, P37–E38, P39–E40, P41–E42, and P43–E44. Residues P31–E52 are 11 X 2 AA tandem repeats of P-E. Acidic residues-rich tracts occupy residues P31 to E68 and E77 to G101. Residues S45–E46 form an 8; approximate repeat. Repeat copies occupy residues P47–E48, P49–E50, and P51–E52. Positions A102 to A113 are enriched in low complexity. The span at V114–R129 shows a compositional bias: pro residues. A PPM-type phosphatase domain is found at E231 to L488. D273, G274, D435, and D479 together coordinate Mn(2+). The disordered stretch occupies residues S498–P537. A compositionally biased stretch (basic and acidic residues) spans D518 to R527. A phosphoserine mark is found at S535 and S548.

The protein belongs to the PP2C family. In terms of assembly, heterotrimer. Interacts with PAX1 and ARHGEF6 (or ARHGEF7). Mg(2+) is required as a cofactor. Mn(2+) serves as cofactor.

It localises to the nucleus. The protein resides in the cytoplasm. The catalysed reaction is O-phospho-L-seryl-[protein] + H2O = L-seryl-[protein] + phosphate. It catalyses the reaction O-phospho-L-threonyl-[protein] + H2O = L-threonyl-[protein] + phosphate. Its function is as follows. Protein phosphatase that inactivates multifunctional CaM kinases such as CAMK4 and CAMK2. Dephosphorylates and inactivates PAK. May play a role in the inhibition of actin fiber stress breakdown and in morphological changes driven by TNK2/CDC42. Dephosphorylates PRKAA2. The protein is Protein phosphatase 1E (PPM1E) of Homo sapiens (Human).